Here is a 1972-residue protein sequence, read N- to C-terminus: Myosin-11 (1972 aa).

3 positions are modified to phosphoserine: serine 8, serine 23, and serine 40. A Myosin N-terminal SH3-like domain is found at 31-81 (AAKRLVWVPSEKQGFEAASIKEEKGDEVVVELVENGKKVTVGKDDIQKMNP). One can recognise a Myosin motor domain in the interval 85-783 (SKVEDMAELT…VLAHLEEERD (699 aa)). Position 129 is an N6,N6,N6-trimethyllysine (lysine 129). 178-185 (GESGAGKT) provides a ligand contact to ATP. Actin-binding regions lie at residues 661 to 683 (LGKL…IPNH) and 762 to 776 (RIGQ…GVLA). The IQ domain occupies 786–815 (ITDVIMAFQAMCRGYLARKAFAKRQQQLTA). Positions 844-1934 (LLQVTRQEEE…KSKLRRGNET (1091 aa)) form a coiled coil. The tract at residues 858 to 882 (EDELQKTKERQQKAENELKELEQKH) is disordered. At threonine 1177 the chain carries Phosphothreonine. Phosphoserine occurs at positions 1684 and 1722. Disordered stretches follow at residues 1744 to 1800 (ELEE…LRSK) and 1866 to 1972 (EQYK…KASE). The span at 1762 to 1788 (ATQQAEQLSNELATERSTAQKNESARQ) shows a compositional bias: polar residues. Basic and acidic residues-rich tracts occupy residues 1789–1800 (QLERQNKELRSK) and 1866–1876 (EQYKEQAEKGN). Residues 1935–1972 (SFVPSRRSGGRRVIENADGSEEETDTRDADFNGTKASE) are C-terminal. The residue at position 1954 (serine 1954) is a Phosphoserine. A Phosphothreonine modification is found at threonine 1958. Position 1971 is a phosphoserine (serine 1971).

The protein belongs to the TRAFAC class myosin-kinesin ATPase superfamily. Myosin family. In terms of assembly, muscle myosin is a hexameric protein that consists of 2 heavy chain subunits (MHC), 2 alkali light chain subunits (MLC) and 2 regulatory light chain subunits (MLC-2). Smooth muscle; expressed in the umbilical artery, bladder, esophagus and trachea. Isoform 1 is mostly found in slowly contracting tonic muscles.

The protein resides in the melanosome. Functionally, muscle contraction. In Homo sapiens (Human), this protein is Myosin-11 (MYH11).